The sequence spans 204 residues: Photosynthetic NDH subunit of subcomplex B 3, chloroplastic (204 aa).

Disordered regions lie at residues 1–24 (MGSV…FSHK) and 45–68 (KTVR…DEPP). Residues 1-48 (MGSVQLSGSGLVASLPPNHSFSHKTKLNKPNSYFFRSKHNAARTKTVR) constitute a chloroplast transit peptide. One can recognise a 2Fe-2S ferredoxin-type domain in the interval 76-180 (HSVLLPDGTP…STGLVVIQQL (105 aa)). The [2Fe-2S] cluster site is built by Cys-120, Cys-126, Cys-129, and Cys-162.

In terms of assembly, part of the chloroplast NDH complex, composed of a mixture of chloroplast and nucleus encoded subunits. Component of the NDH subcomplex B, at least composed of PnsB1, PnsB2, PnsB3, PnsB4 and PnsB5.

The protein resides in the plastid. It localises to the chloroplast thylakoid membrane. Functionally, NDH shuttles electrons from NAD(P)H:plastoquinone, via FMN and iron-sulfur (Fe-S) centers, to quinones in the photosynthetic chain and possibly in a chloroplast respiratory chain. The immediate electron acceptor for the enzyme in this species is believed to be plastoquinone. Couples the redox reaction to proton translocation, and thus conserves the redox energy in a proton gradient. This Arabidopsis thaliana (Mouse-ear cress) protein is Photosynthetic NDH subunit of subcomplex B 3, chloroplastic.